A 764-amino-acid polypeptide reads, in one-letter code: Complement factor B (764 aa).

Residues 1–25 form the signal peptide; the sequence is MGSNLSPQLCLMPFILGLLSGGVTT. Sushi domains are found at residues 35–100, 101–160, and 163–220; these read GSCS…ECRA, IHCP…ICDN, and GYCS…SCQD. 6 disulfide bridges follow: C37/C76, C62/C98, C103/C145, C131/C158, C165/C205, and C191/C218. N122 and N142 each carry an N-linked (GlcNAc...) asparagine glycan. One can recognise a VWFA domain in the interval 270–469; it reads NIYLVLDGSD…NLEDVFFQMI (200 aa). Residues S278 and S280 each contribute to the Mg(2+) site. The N-linked (GlcNAc...) asparagine glycan is linked to N285. Mg(2+) is bound at residue T353. A glycan (N-linked (GlcNAc...) asparagine) is linked at N378. One can recognise a Peptidase S1 domain in the interval 477 to 757; it reads LCGMVWEHRK…VLPWLKQKLQ (281 aa). Disulfide bonds link C478–C596, C511–C527, C599–C615, C656–C682, and C695–C725. Active-site charge relay system residues include H526 and D576. S699 functions as the Charge relay system in the catalytic mechanism.

This sequence belongs to the peptidase S1 family. In terms of assembly, monomer. Interacts with complement C3b; this interaction is dependent on the presence of Mg(2+). As to quaternary structure, catalytic component of the C3 convertase of the alternative complement pathway, also named C3bBb, composed of complement factor B Bb and complement C3b. Catalytic component of the C5 convertase of the alternative complement pathway, also named C3bBb3b, composed of complement factor B Bb and additional molecules of complement C3b. Interacts to CFP; this interaction contributes to the stabilization of the active C3-convertase enzyme complex. It depends on Mg(2+) as a cofactor. Requires Mn(2+) as cofactor. In terms of processing, cleaved by CFD following activation of the alternative complement system, generating Ba and Bb chains. Cleavage and activation takes place when CFB is already associated with complement C3b.

It localises to the secreted. The protein localises to the cell surface. It catalyses the reaction Cleavage of Arg-|-Ser bond in complement component C3 alpha-chain to yield C3a and C3b, and Arg-|-Xaa bond in complement component C5 alpha-chain to yield C5a and C5b.. Precursor of the catalytic component of the C3 and C5 convertase complexes of the alternative pathway of the complement system, a cascade of proteins that leads to phagocytosis and breakdown of pathogens and signaling that strengthens the adaptive immune system. The alternative complement pathway acts as an amplification loop that enhances other complement pathways (classical, lectin and GZMK) by promoting formation of additional C3 and C5 convertases. CFB is cleaved and activated by CFD to generate Ba and Bb chains; Bb chain constituting the catalytic component of the C3 and C5 convertases. Functionally, serine protease component of the complement C3 and C5 convertase complexes of the alternative complement pathway. Following cleavage and activation by factor D (CFD), forms the C3 convertase together with complement C3b. As part of the C3 convertase, cleaves and activates C3 into C3a anaphylatoxin and C3b opsonin, the next components of the complement pathways. When an additional complement C3b molecule binds to the C3 convertase, forms the C5 convertase, which cleaves and activates C5 into C5a anaphylatoxin and C5b component of the membrane attack complex. In terms of biological role, involved in proliferation and differentiation of preactivated B-lymphocytes, rapid spreading of peripheral blood monocytes, stimulation of lymphocyte blastogenesis and lysis of erythrocytes. The chain is Complement factor B (CFB) from Pongo pygmaeus (Bornean orangutan).